Reading from the N-terminus, the 156-residue chain is 6,7-dimethyl-8-ribityllumazine synthase (156 aa).

Residues Phe22, 57–59, and 81–83 each bind 5-amino-6-(D-ribitylamino)uracil; these read AVE and TVI. 86-87 contributes to the (2S)-2-hydroxy-3-oxobutyl phosphate binding site; that stretch reads GT. His89 serves as the catalytic Proton donor. A 5-amino-6-(D-ribitylamino)uracil-binding site is contributed by Phe114. Arg128 provides a ligand contact to (2S)-2-hydroxy-3-oxobutyl phosphate.

This sequence belongs to the DMRL synthase family. In terms of assembly, forms an icosahedral capsid composed of 60 subunits, arranged as a dodecamer of pentamers.

It carries out the reaction (2S)-2-hydroxy-3-oxobutyl phosphate + 5-amino-6-(D-ribitylamino)uracil = 6,7-dimethyl-8-(1-D-ribityl)lumazine + phosphate + 2 H2O + H(+). It participates in cofactor biosynthesis; riboflavin biosynthesis; riboflavin from 2-hydroxy-3-oxobutyl phosphate and 5-amino-6-(D-ribitylamino)uracil: step 1/2. Its function is as follows. Catalyzes the formation of 6,7-dimethyl-8-ribityllumazine by condensation of 5-amino-6-(D-ribitylamino)uracil with 3,4-dihydroxy-2-butanone 4-phosphate. This is the penultimate step in the biosynthesis of riboflavin. In Vibrio campbellii (strain ATCC BAA-1116), this protein is 6,7-dimethyl-8-ribityllumazine synthase.